The chain runs to 432 residues: uncharacterized protein (432 aa).

13 helical membrane passes run 7–27, 29–49, 68–88, 124–144, 156–176, 196–216, 241–261, 266–286, 291–311, 326–346, 358–378, 379–399, and 412–432; these read FIGL…PDIY, GIVI…PLPV, EALT…FMLA, FLSM…IALG, FLLL…IIGS, VGFP…YIYF, LVIF…SEIF, FDSV…LVEV, KIDW…GVIV, ILGN…TIIL, IIVP…LILA, VGMS…NAIV, and IGMI…ILYL.

This sequence belongs to the CitM (TC 2.A.11) transporter family.

The protein localises to the cell membrane. This is an uncharacterized protein from Methanocaldococcus jannaschii (strain ATCC 43067 / DSM 2661 / JAL-1 / JCM 10045 / NBRC 100440) (Methanococcus jannaschii).